The sequence spans 249 residues: MSSRYGRALTIFSPDGHLLQVEYAQEAVRKGSTAVGVRGANCVVLGVEKSSVSEMQEDRTVRKISMLDRHVALAFAGLTADARILINRGQVECQSHRLNFENQVTLEYITRYLAQLKQKYTQCNGRRPFGISCLIGGIDADGSARLFHTEPSGIFHEYKATATGRWANTVREFFEKAYSDHEVTTKCDAIKLAMRALLEVTQMSQMRLEVAVLENGKPMKMLDSVVISEIVKIVQNEKELQAKAHKMKR.

It belongs to the peptidase T1A family. The 26S proteasome consists of a 20S proteasome core and two 19S regulatory subunits. The 20S proteasome core is composed of 28 subunits that are arranged in four stacked rings, resulting in a barrel-shaped structure. The two end rings are each formed by seven alpha subunits, and the two central rings are each formed by seven beta subunits. The catalytic chamber with the active sites is on the inside of the barrel. Testis specific.

The protein resides in the cytoplasm. It localises to the nucleus. Its function is as follows. The proteasome is a multicatalytic proteinase complex which is characterized by its ability to cleave peptides with Arg, Phe, Tyr, Leu, and Glu adjacent to the leaving group at neutral or slightly basic pH. The proteasome has an ATP-dependent proteolytic activity. The chain is Proteasome subunit alpha type-7-1A (Prosalpha4T1) from Drosophila melanogaster (Fruit fly).